Consider the following 318-residue polypeptide: Na(+)-translocating ferredoxin:NAD(+) oxidoreductase complex subunit D (318 aa).

The next 3 membrane-spanning stretches (helical) occupy residues 35–55 (LAVA…ICVI), 77–99 (WSAV…WWIG), and 114–134 (FGGL…FLLA). Thr-156 is subject to FMN phosphoryl threonine. Helical transmembrane passes span 182–202 (VYGC…LYLI), 206–226 (IISW…ALLV), and 261–281 (IIYA…GGYP).

It belongs to the NqrB/RnfD family. As to quaternary structure, the complex is composed of six subunits: RnfA, RnfB, RnfC, RnfD, RnfE and RnfG. Requires FMN as cofactor.

The protein localises to the cell membrane. It catalyses the reaction 2 reduced [2Fe-2S]-[ferredoxin] + Na(+)(in) + NAD(+) + H(+) = 2 oxidized [2Fe-2S]-[ferredoxin] + Na(+)(out) + NADH. Functionally, part of a membrane-bound complex that couples electron transfer with translocation of ions across the membrane. Couples electron transfer from reduced ferredoxin to NAD(+) with electrogenic movement of Na(+) out of the cell. Involved in caffeate respiration. The sequence is that of Na(+)-translocating ferredoxin:NAD(+) oxidoreductase complex subunit D from Acetobacterium woodii (strain ATCC 29683 / DSM 1030 / JCM 2381 / KCTC 1655 / WB1).